Consider the following 382-residue polypeptide: Dual-specificity RNA methyltransferase RlmN (382 aa).

Glu96 serves as the catalytic Proton acceptor. The region spanning 102-342 (QGKRGTLCVS…VRTTRGEDID (241 aa)) is the Radical SAM core domain. Cys109 and Cys345 are joined by a disulfide. Residues Cys116, Cys120, and Cys123 each coordinate [4Fe-4S] cluster. S-adenosyl-L-methionine-binding positions include 170-171 (GE), Ser202, 224-226 (SLH), and Asn302. The active-site S-methylcysteine intermediate is the Cys345.

This sequence belongs to the radical SAM superfamily. RlmN family. [4Fe-4S] cluster serves as cofactor.

The protein localises to the cytoplasm. The catalysed reaction is adenosine(2503) in 23S rRNA + 2 reduced [2Fe-2S]-[ferredoxin] + 2 S-adenosyl-L-methionine = 2-methyladenosine(2503) in 23S rRNA + 5'-deoxyadenosine + L-methionine + 2 oxidized [2Fe-2S]-[ferredoxin] + S-adenosyl-L-homocysteine. It carries out the reaction adenosine(37) in tRNA + 2 reduced [2Fe-2S]-[ferredoxin] + 2 S-adenosyl-L-methionine = 2-methyladenosine(37) in tRNA + 5'-deoxyadenosine + L-methionine + 2 oxidized [2Fe-2S]-[ferredoxin] + S-adenosyl-L-homocysteine. Its function is as follows. Specifically methylates position 2 of adenine 2503 in 23S rRNA and position 2 of adenine 37 in tRNAs. m2A2503 modification seems to play a crucial role in the proofreading step occurring at the peptidyl transferase center and thus would serve to optimize ribosomal fidelity. The protein is Dual-specificity RNA methyltransferase RlmN of Pseudomonas savastanoi pv. phaseolicola (strain 1448A / Race 6) (Pseudomonas syringae pv. phaseolicola (strain 1448A / Race 6)).